Reading from the N-terminus, the 219-residue chain is Elongation factor Ts (219 aa).

The interval 82 to 85 (TDFV) is involved in Mg(2+) ion dislocation from EF-Tu.

It belongs to the EF-Ts family.

Its subcellular location is the cytoplasm. Associates with the EF-Tu.GDP complex and induces the exchange of GDP to GTP. It remains bound to the aminoacyl-tRNA.EF-Tu.GTP complex up to the GTP hydrolysis stage on the ribosome. The chain is Elongation factor Ts from Anaeromyxobacter dehalogenans (strain 2CP-1 / ATCC BAA-258).